A 353-amino-acid polypeptide reads, in one-letter code: uncharacterized protein (353 aa).

Asp212, Asp223, His287, Glu316, and Glu330 together coordinate Mn(2+).

It belongs to the peptidase M24B family. Mn(2+) is required as a cofactor.

This is an uncharacterized protein from Bacillus subtilis (strain 168).